Here is a 273-residue protein sequence, read N- to C-terminus: HTH-type transcriptional activator RhaS (273 aa).

Positions 174 to 272 (YQLLDWLQNN…SQSPRDLRSQ (99 aa)) constitute an HTH araC/xylS-type domain. 2 consecutive DNA-binding regions (H-T-H motif) follow at residues 191-212 (PELA…KNKT) and 239-262 (VTDI…KREF).

In terms of assembly, binds DNA as a dimer.

The protein resides in the cytoplasm. Functionally, activates expression of the rhaBAD and rhaT operons. In Yersinia pestis bv. Antiqua (strain Antiqua), this protein is HTH-type transcriptional activator RhaS.